Reading from the N-terminus, the 78-residue chain is Small ribosomal subunit protein uS17 (78 aa).

This sequence belongs to the universal ribosomal protein uS17 family. Part of the 30S ribosomal subunit.

In terms of biological role, one of the primary rRNA binding proteins, it binds specifically to the 5'-end of 16S ribosomal RNA. The chain is Small ribosomal subunit protein uS17 from Rhizobium meliloti (strain 1021) (Ensifer meliloti).